Here is a 985-residue protein sequence, read N- to C-terminus: Ras and Rab interactor 3 (985 aa).

Residues 1-24 (MIRHAGAPARGDPTGPVPVVGKGE) form a disordered region. The SH2 domain occupies 63-158 (WLQLSLGQAE…LLPFTLRLPQ (96 aa)). Disordered stretches follow at residues 183–202 (SLNP…DRAP), 251–293 (QPPL…QPCS), and 315–531 (PPVP…KGSL). Positions 189-201 (ERGKPAEPPRDRA) are enriched in basic and acidic residues. 2 stretches are compositionally biased toward pro residues: residues 278–288 (RRPPPPPPVLP) and 315–336 (PPVP…PNQP). Residues 424-442 (DTPRESTEQGQDTEVKASD) show a composition bias toward basic and acidic residues. Positions 587–732 (FSSMFHAFLS…TTTDLGVTTS (146 aa)) are interaction with RAB5B. Residues 703-846 (HSKDGSLQQL…IKSYDKITVT (144 aa)) enclose the VPS9 domain. One can recognise a Ras-associating domain in the interval 877–963 (QDFICVSYLE…RDFHFVYRPL (87 aa)).

It belongs to the RIN (Ras interaction/interference) family. Interacts with CD2AP, RAB5B, RAB31 and BIN1. In terms of tissue distribution, widely expressed.

The protein resides in the cytoplasm. Its subcellular location is the cytoplasmic vesicle. The protein localises to the early endosome. Functionally, ras effector protein that functions as a guanine nucleotide exchange (GEF) for RAB5B and RAB31, by exchanging bound GDP for free GTP. Required for normal RAB31 function. The protein is Ras and Rab interactor 3 (RIN3) of Homo sapiens (Human).